A 155-amino-acid polypeptide reads, in one-letter code: Histone H3-like centromeric protein hH3v (155 aa).

Residues 1–24 (MPPKKGGVTKSKAVSKKAAAVPTP) show a composition bias toward low complexity. Residues 1-56 (MPPKKGGVTKSKAVSKKAAAVPTPKATPPGRRKSRASSVQPGDPVPQGKKRRYRPG) are disordered. The interval 45 to 148 (VPQGKKRRYR…IQLARRIRGV (104 aa)) is H3-like.

The protein belongs to the histone H3 family. As to quaternary structure, component of centromeric nucleosomes, where DNA is wrapped around a histone octamer core. The octamer contains two molecules each of H2A, H2B, hH3v/CENPA and H4 assembled in one hH3v-H4 heterotetramer and two H2A-H2B heterodimers. Interacts with the inner kinetochore. Post-translationally, ubiquitinated. Is degraded through ubiquitin-mediated proteolysis when not protected by its association to the kinetochore.

It localises to the nucleus. The protein localises to the chromosome. Its subcellular location is the centromere. In terms of biological role, histone H3-like nucleosomal protein that is specifically found in centromeric nucleosomes. Replaces conventional H3 in the nucleosome core of centromeric chromatin that serves as an assembly site for the inner kinetochore. Required for recruitment and assembly of kinetochore proteins, mitotic progression and chromosome segregation. May serve as an epigenetic mark that propagates centromere identity through replication and cell division. This is Histone H3-like centromeric protein hH3v (hH3v) from Neurospora crassa (strain ATCC 24698 / 74-OR23-1A / CBS 708.71 / DSM 1257 / FGSC 987).